The following is a 488-amino-acid chain: MSLRIKQEALTFDDVLLVPAHSTVLPNTANLSTQLTKEIRLNIPMLSAAMDTVTETKLAISLAQEGGIGFIHKNMTIERQADRVRKVKKFESGIVSEPVTVLPNLTLAELAEMVKKNGFAGYPVVDGENNLIGIITGRDTRFVKDLSKTVSQVMTKKEDLVTVKEGASREEILELMHQHRVEKVLVVNDSFKLKGMITVKDFQKAEQKPNACKDEFGRLRVGAAVGAGAGNEERIDALVKAGVDVLLIDSSHGHSEGVLQRVRETRAKYPNLPIVAGNVATAEGAIALADAGASAVKVGIGPGSICTTRIVTGVGVPQITAIADAAAALKDRGIPVIADGGIRFSGDIAKAIAAGASCVMVGSMFAGTEEAPGEIELYQGRAFKSYRGMGSLGAMAKGSSDRYFQSDNAADKLVPEGIEGRIPYKGYLKEIIHQQMGGLRSCMGLTGCATIDELRTKAEFVRISGAGIKESHVHDVAITKEAPNYRMG.

2 CBS domains span residues 94–150 and 154–215; these read IVSE…SKTV and MTKK…CKDE. Residues Asp249, 249 to 251, and 299 to 301 contribute to the NAD(+) site; these read DSS and GIG. K(+) is bound by residues Gly301 and Gly303. Ser304 lines the IMP pocket. Residue Cys306 participates in K(+) binding. Catalysis depends on Cys306, which acts as the Thioimidate intermediate. Residues 339-341, 362-363, and 386-390 contribute to the IMP site; these read DGG, GS, and YRGMG. Residue Arg402 is the Proton acceptor of the active site. An IMP-binding site is contributed by Glu416. 3 residues coordinate K(+): Glu470, Ser471, and His472.

The protein belongs to the IMPDH/GMPR family. Homotetramer. The cofactor is K(+).

It catalyses the reaction IMP + NAD(+) + H2O = XMP + NADH + H(+). The protein operates within purine metabolism; XMP biosynthesis via de novo pathway; XMP from IMP: step 1/1. Its activity is regulated as follows. Mycophenolic acid (MPA) is a non-competitive inhibitor that prevents formation of the closed enzyme conformation by binding to the same site as the amobile flap. In contrast, mizoribine monophosphate (MZP) is a competitive inhibitor that induces the closed conformation. MPA is a potent inhibitor of mammalian IMPDHs but a poor inhibitor of the bacterial enzymes. MZP is a more potent inhibitor of bacterial IMPDH. Catalyzes the conversion of inosine 5'-phosphate (IMP) to xanthosine 5'-phosphate (XMP), the first committed and rate-limiting step in the de novo synthesis of guanine nucleotides, and therefore plays an important role in the regulation of cell growth. The polypeptide is Inosine-5'-monophosphate dehydrogenase (Haemophilus influenzae (strain ATCC 51907 / DSM 11121 / KW20 / Rd)).